The chain runs to 328 residues: DNA-directed RNA polymerase subunit alpha (328 aa).

Residues 1–234 are alpha N-terminal domain (alpha-NTD); sequence MQGSVTEFLK…EQLDAFVDLR (234 aa). Residues 248-328 form an alpha C-terminal domain (alpha-CTD) region; it reads FXPILLRPVD…NWPPASIAED (81 aa).

Belongs to the RNA polymerase alpha chain family. Homodimer. The RNAP catalytic core consists of 2 alpha, 1 beta, 1 beta' and 1 omega subunit. When a sigma factor is associated with the core the holoenzyme is formed, which can initiate transcription.

The enzyme catalyses RNA(n) + a ribonucleoside 5'-triphosphate = RNA(n+1) + diphosphate. In terms of biological role, DNA-dependent RNA polymerase catalyzes the transcription of DNA into RNA using the four ribonucleoside triphosphates as substrates. In Haemophilus influenzae (strain ATCC 51907 / DSM 11121 / KW20 / Rd), this protein is DNA-directed RNA polymerase subunit alpha.